A 664-amino-acid polypeptide reads, in one-letter code: PAN2-PAN3 deadenylation complex subunit PAN3 (664 aa).

2 disordered regions span residues 1-27 (MATT…GREN) and 54-134 (DPHK…PGTM). The C3H1-type zinc-finger motif lies at 27 to 56 (NAKDTLCRNVTIYGRCRYEDKGCAFNHDPH). Polar residues predominate over residues 74 to 96 (DSPSFTPSILSSNGSSPTSQSAT). Residues 115–131 (PRSISSRSNSSTPTTRP) show a composition bias toward low complexity. The segment at 265-525 (QTLPNTQLPA…NIDIFITGIS (261 aa)) is pseudokinase domain. ATP contacts are provided by residues Arg-317, 366 to 373 (DYHPLSKT), and 425 to 426 (SK). Positions 526-564 (STLMSTFDSALHLDDQLTSDLSRELENGRLVRLMTKLNF) form a coiled coil. The tract at residues 565 to 664 (VNERPEYEHD…LKPSASRRLH (100 aa)) is knob domain.

This sequence belongs to the protein kinase superfamily. PAN3 family. Homodimer. Forms a heterotrimer with a catalytic subunit pan2 to form the poly(A)-nuclease (PAN) deadenylation complex. Interacts (via PAM-2 motif) with poly(A)-binding protein pab1 (via PABC domain), conferring substrate specificity of the enzyme complex.

The protein localises to the cytoplasm. Regulatory subunit of the poly(A)-nuclease (PAN) deadenylation complex, one of two cytoplasmic mRNA deadenylases involved in mRNA turnover. PAN specifically shortens poly(A) tails of RNA and the activity is stimulated by poly(A)-binding protein pab1. PAN deadenylation is followed by rapid degradation of the shortened mRNA tails by the CCR4-NOT complex. Deadenylated mRNAs are then degraded by two alternative mechanisms, namely exosome-mediated 3'-5' exonucleolytic degradation, or deadenylation-dependent mRNA decaping and subsequent 5'-3' exonucleolytic degradation by xrn1. May also be involved in post-transcriptional maturation of mRNA poly(A) tails. pan3 acts as a positive regulator for PAN activity, recruiting the catalytic subunit pan2 to mRNA via its interaction with RNA and with pab1. The protein is PAN2-PAN3 deadenylation complex subunit PAN3 of Aspergillus niger (strain ATCC MYA-4892 / CBS 513.88 / FGSC A1513).